The following is a 620-amino-acid chain: NADPH-dependent diflavin oxidoreductase 1 (620 aa).

The Flavodoxin-like domain maps to 6 to 168; sequence IAILYGSETG…VYSEFEKRVL (163 aa). Residues 12–17, 59–62, and 106–115 each bind FMN; these read SETGTA, STTG, and LGDSSYSKFN. Residues 222–475 enclose the FAD-binding FR-type domain; that stretch reads SSVKYGTVVT…LLPAGKQDRP (254 aa). FAD-binding positions include R380, 410-413, and 442-445; these read RFFS and GLCT. 535–536 lines the NADP(+) pocket; the sequence is SR. FAD is bound at residue W620.

Belongs to the NADPH-dependent diflavin oxidoreductase NDOR1 family. This sequence in the N-terminal section; belongs to the flavodoxin family. The protein in the C-terminal section; belongs to the flavoprotein pyridine nucleotide cytochrome reductase family. In terms of assembly, interacts with DRE2; as part of the cytosolic iron-sulfur (Fe-S) protein assembly (CIA) machinery. It depends on FAD as a cofactor. Requires FMN as cofactor.

The protein resides in the cytoplasm. It is found in the mitochondrion. It catalyses the reaction 2 oxidized [2Fe-2S]-[protein] + NADPH = 2 reduced [2Fe-2S]-[protein] + NADP(+) + H(+). NADPH-dependent reductase which is a central component of the cytosolic iron-sulfur (Fe-S) protein assembly (CIA) machinery. Transfers electrons from NADPH via its FAD and FMN prosthetic groups to the [2Fe-2S] cluster of DRE2, another key component of the CIA machinery. In turn, this reduced cluster provides electrons for assembly of cytosolic iron-sulfur cluster proteins. Positively controls H(2)O(2)-induced cell death. In Eremothecium gossypii (strain ATCC 10895 / CBS 109.51 / FGSC 9923 / NRRL Y-1056) (Yeast), this protein is NADPH-dependent diflavin oxidoreductase 1.